We begin with the raw amino-acid sequence, 89 residues long: Small ribosomal subunit protein uS15 (89 aa).

The protein belongs to the universal ribosomal protein uS15 family. As to quaternary structure, part of the 30S ribosomal subunit. Forms a bridge to the 50S subunit in the 70S ribosome, contacting the 23S rRNA.

Its function is as follows. One of the primary rRNA binding proteins, it binds directly to 16S rRNA where it helps nucleate assembly of the platform of the 30S subunit by binding and bridging several RNA helices of the 16S rRNA. Functionally, forms an intersubunit bridge (bridge B4) with the 23S rRNA of the 50S subunit in the ribosome. This is Small ribosomal subunit protein uS15 from Cellvibrio japonicus (strain Ueda107) (Pseudomonas fluorescens subsp. cellulosa).